The following is a 388-amino-acid chain: Protein TsgA homolog (388 aa).

Helical transmembrane passes span 11–31 (WISFLSYAFTGALVVVTGMIM), 50–70 (TFLNAGILVSIFINSWLIEII), 77–97 (IFSFILTIIAVIGIVLCNSIF), 101–121 (INMFILGLVSGITMSIGTFII), 133–153 (LLLLTDSFFSMSGMIFPIVTA), 160–180 (IIWYWSYICIGAIYLLIFLLT), 206–226 (VFLLSISALLYILGQLGFISW), 244–264 (SLVSGFWMSYMLGMWFFSFII), 268–288 (NLYRMFIFLTSMSTILMYCFI), 298–318 (YIIISLGFFSSAIYTIIITLA), 332–352 (LILLFGTIGTFLTFIITSPIV), and 360–380 (TLISSNILYGIVFFLSILIYF).

Belongs to the major facilitator superfamily. TsgA family.

Its subcellular location is the cell membrane. This Buchnera aphidicola subsp. Acyrthosiphon pisum (strain 5A) protein is Protein TsgA homolog.